A 246-amino-acid chain; its full sequence is Polyhedrin (246 aa).

It belongs to the polyhedrin family.

Its function is as follows. Major component of the virus occlusion bodies, which are large proteinaceous structures (polyhedra), that protect the virus from the outside environment for extended periods until they are ingested by insect larvae. This chain is Polyhedrin (PH), found in Mamestra brassicae nuclear polyhedrosis virus (MbNPV).